Consider the following 422-residue polypeptide: MIYIDNIVAQEVMDSRGNPTVKATVTLSDGNSASAIVPSGASTGKREALELRDGDSRYLGKGVLQACENVNTKLSEELIGLSPFDQSEIDAIIQELDGTENFANIGANAALGVSMAVARSAAKSLNIPLYRYLGGANALTLPVPMLNIINGGSHADNTVDFQEYMIMPLGFENFSESLRASAEVYHHLKKILKDSKHITSIGDEGGFAPNLKTNEEPIQIIIQAIEKAGYRPGEEIALALDVASSEFVNEQGLYHLEGEGRTLSSEELVGYYESLIAKYPIVSIEDGLSEDDWKGWKYLTERLGGKVQLVGDDLFVTNAKILQEGISQGIANAILIKPNQIGTVSQTMQTVRLAQRNHYRCVMSHRSGESEDSFIADFAVALNTGEIKTGSTARSERIAKYNRLLAIESELCRSEYLGRSLF.

(2R)-2-phosphoglycerate is bound at residue Gln-162. The active-site Proton donor is Glu-204. The Mg(2+) site is built by Asp-241, Glu-285, and Asp-312. The (2R)-2-phosphoglycerate site is built by Lys-337, Arg-366, Ser-367, and Lys-388. Lys-337 functions as the Proton acceptor in the catalytic mechanism.

This sequence belongs to the enolase family. Mg(2+) is required as a cofactor.

It localises to the cytoplasm. It is found in the secreted. Its subcellular location is the cell surface. It catalyses the reaction (2R)-2-phosphoglycerate = phosphoenolpyruvate + H2O. It participates in carbohydrate degradation; glycolysis; pyruvate from D-glyceraldehyde 3-phosphate: step 4/5. Functionally, catalyzes the reversible conversion of 2-phosphoglycerate (2-PG) into phosphoenolpyruvate (PEP). It is essential for the degradation of carbohydrates via glycolysis. The polypeptide is Enolase (Wolinella succinogenes (strain ATCC 29543 / DSM 1740 / CCUG 13145 / JCM 31913 / LMG 7466 / NCTC 11488 / FDC 602W) (Vibrio succinogenes)).